Consider the following 786-residue polypeptide: Kazrin-A (786 aa).

Positions 44–70 (EEPGEPQEHQQQQQQQNHQDAPVQRQK) are disordered. Positions 52-62 (HQQQQQQQNHQ) are enriched in low complexity. Residues 92 to 270 (LLHEEVLRLQ…SLATLTKDVP (179 aa)) adopt a coiled-coil conformation. The disordered stretch occupies residues 350 to 425 (MSDASVMEGE…LFDDSDSLSS (76 aa)). SAM domains lie at 457 to 522 (WRAG…YRDA), 535 to 599 (DHHW…LHTL), and 623 to 686 (WTCQ…SEEM). The segment at 703 to 760 (PLGTPPTLHRQSSLSSSSPSCHDDQQSLRRVKQQLGLSPKNLTARNISHQSRSGSFPR) is disordered. Positions 742-758 (KNLTARNISHQSRSGSF) are enriched in polar residues.

The protein belongs to the kazrin family.

This Danio rerio (Zebrafish) protein is Kazrin-A (kazna).